Consider the following 459-residue polypeptide: UDP-N-acetylmuramoylalanine--D-glutamate ligase (459 aa).

119-125 (GTNGKTT) contacts ATP.

Belongs to the MurCDEF family.

Its subcellular location is the cytoplasm. It carries out the reaction UDP-N-acetyl-alpha-D-muramoyl-L-alanine + D-glutamate + ATP = UDP-N-acetyl-alpha-D-muramoyl-L-alanyl-D-glutamate + ADP + phosphate + H(+). Its pathway is cell wall biogenesis; peptidoglycan biosynthesis. Functionally, cell wall formation. Catalyzes the addition of glutamate to the nucleotide precursor UDP-N-acetylmuramoyl-L-alanine (UMA). This Lacticaseibacillus casei (strain BL23) (Lactobacillus casei) protein is UDP-N-acetylmuramoylalanine--D-glutamate ligase.